A 313-amino-acid polypeptide reads, in one-letter code: Calcyphosin-2 (313 aa).

EF-hand domains follow at residues 144–179 (RILTGLGKYFQQLDKEGNGLLDKADFKQALKVFHLE), 180–215 (VSEKDFESAWLILDDNGNGKVDYGEFKRGIIGEMNE), and 216–251 (YRKSYVRKAFMKLDFNKTGSVPITNIRKCYCAKKHS). Ca(2+) contacts are provided by aspartate 193, asparagine 195, asparagine 197, lysine 199, and glutamate 204.

The chain is Calcyphosin-2 (CAPS2) from Macaca fascicularis (Crab-eating macaque).